The sequence spans 105 residues: Dicamba O-demethylase, ferredoxin component (105 aa).

Positions 2–105 (PQITVVNQSG…GIKVTIAQED (104 aa)) constitute a 2Fe-2S ferredoxin-type domain. [2Fe-2S] cluster-binding residues include Cys40, Cys46, Cys49, and Cys86.

The protein belongs to the adrenodoxin/putidaredoxin family. As to quaternary structure, monomer. The dicamba O-demethylase multicomponent enzyme system is composed of an oxygenase component (DdmC) and an electron transfer component formed by a ferredoxin reductase (DdmA1) and a ferredoxin (DdmB). In vitro, dicamba O-demethylase assays in which DdmA2 is substituted for DdmA1 demonstrate that the two enzymes possess nearly identical activities. The cofactor is [2Fe-2S] cluster.

Functionally, component of the dicamba O-demethylase multicomponent enzyme system involved in the degradation of the herbicide dicamba. In vitro, functions as an intermediate electron transfer protein. In Stenotrophomonas maltophilia (Pseudomonas maltophilia), this protein is Dicamba O-demethylase, ferredoxin component.